Here is a 672-residue protein sequence, read N- to C-terminus: Glycine--tRNA ligase beta subunit (672 aa).

Belongs to the class-II aminoacyl-tRNA synthetase family. As to quaternary structure, tetramer of two alpha and two beta subunits.

Its subcellular location is the cytoplasm. It catalyses the reaction tRNA(Gly) + glycine + ATP = glycyl-tRNA(Gly) + AMP + diphosphate. The polypeptide is Glycine--tRNA ligase beta subunit (Thermotoga sp. (strain RQ2)).